Here is a 139-residue protein sequence, read N- to C-terminus: Arsenate reductase (139 aa).

Catalysis depends on nucleophile residues cysteine 10, cysteine 82, and cysteine 89. Intrachain disulfides connect cysteine 10–cysteine 82 and cysteine 82–cysteine 89.

This sequence belongs to the low molecular weight phosphotyrosine protein phosphatase family. Thioredoxin-coupled ArsC subfamily.

It localises to the cytoplasm. The enzyme catalyses arsenate + [thioredoxin]-dithiol + H(+) = arsenite + [thioredoxin]-disulfide + H2O. In terms of biological role, catalyzes the reduction of arsenate [As(V)] to arsenite [As(III)]. This chain is Arsenate reductase, found in Bacillus licheniformis (strain ATCC 14580 / DSM 13 / JCM 2505 / CCUG 7422 / NBRC 12200 / NCIMB 9375 / NCTC 10341 / NRRL NRS-1264 / Gibson 46).